Consider the following 142-residue polypeptide: Maximins y/H11 (142 aa).

Residues 1-18 (MNFKYIVAVSFLITSGYA) form the signal peptide. Positions 19-43 (ESVKNDEQSLSQRDVLEEESLREIR) are excised as a propeptide. Position 68 is a phenylalanine amide (F68). Residues 72 to 121 (SAEDHEVMKRLEAVIRDLDSLDHPEEASERETRGFNQEEIANLFTKKEKR) constitute a propeptide that is removed on maturation. I141 is modified (isoleucine amide).

It belongs to the bombinin family. In terms of tissue distribution, expressed by the skin glands.

It is found in the secreted. Its function is as follows. Maximin-y shows antimicrobial activity against bacteria and against the fungus C.albicans. It has little hemolytic activity. Maximin-H11 shows antimicrobial activity against bacteria and against the fungus C.albicans. Shows strong hemolytic activity. The chain is Maximins y/H11 from Bombina maxima (Giant fire-bellied toad).